A 127-amino-acid chain; its full sequence is Small ribosomal subunit protein uS11 (127 aa).

The protein belongs to the universal ribosomal protein uS11 family. As to quaternary structure, part of the 30S ribosomal subunit. Interacts with proteins S7 and S18. Binds to IF-3.

Its function is as follows. Located on the platform of the 30S subunit, it bridges several disparate RNA helices of the 16S rRNA. Forms part of the Shine-Dalgarno cleft in the 70S ribosome. This Streptococcus suis (strain 98HAH33) protein is Small ribosomal subunit protein uS11.